The following is a 590-amino-acid chain: Interferon alpha/beta receptor 1 (590 aa).

The first 26 residues, 1 to 26 (MLAVVGAAALVLVAGAPWVLPSAAGG), serve as a signal peptide directing secretion. The Extracellular segment spans residues 27-429 (ENLKPPENID…EKTRPGSFST (403 aa)). 4 consecutive Fibronectin type-III domains span residues 31 to 125 (PPEN…PFYT), 127 to 226 (HMSP…TTVA), 230 to 327 (PVPG…FIDS), and 332 to 425 (LPPP…TRPG). The N-linked (GlcNAc...) asparagine glycan is linked to N43. C78 and C86 form a disulfide bridge. N109, N181, and N214 each carry an N-linked (GlcNAc...) asparagine glycan. Disulfide bonds link C199/C220 and C284/C292. N-linked (GlcNAc...) asparagine glycans are attached at residues N314, N370, N409, and N413. An intrachain disulfide couples C397 to C419. A helical transmembrane segment spans residues 430-449 (IWIITGLGVVFFSVMVLYAL). Residues 450–590 (RSVWKYLCHV…ALRTEPALLC (141 aa)) lie on the Cytoplasmic side of the membrane. The interval 483 to 492 (VLLTAEEHTE) is important for interaction with TYK2. The tract at residues 514–545 (DLRKYSSQTSQDSGNYSNEEEESVGTESGQAV) is disordered. A Glycyl lysine isopeptide (Lys-Gly) (interchain with G-Cter in ubiquitin) cross-link involves residue K517. Over residues 518–530 (YSSQTSQDSGNYS) the composition is skewed to polar residues. At S526 the chain carries Phosphoserine.

This sequence belongs to the type II cytokine receptor family. In terms of assembly, heterodimer with IFNAR2; forming the receptor for type I interferon. Interacts with TYK2. Interacts with STAT1 and STAT2. Interacts (serine-phosphorylated form) with FBXW11, the substrate recognition component of a SCF (SKP1-CUL1-F-box protein) E3 ubiquitin-protein ligase complex. 3Interacts with SHMT2; this promotes interaction with ABRAXAS2 and the BRISC complex. Interacts with TRIM10; this interaction prevents association between IFNAR1 and TYK2. Post-translationally, ubiquitinated. This leads to its internalization and lysosomal degradation. The 'Lys-63'-linked ubiquitin chains are cleaved off by the BRISC complex; this prevents receptor internalization and degradation. Probable ubiquitination sites have been identified in human, but are poorly conserved across species. Phosphorylated on serine residues in response to interferon binding; this promotes interaction with FBXW11 and ubiquitination.

Its subcellular location is the cell membrane. The protein localises to the late endosome. The protein resides in the lysosome. Its function is as follows. Together with IFNAR2, forms the heterodimeric receptor for type I interferons (including interferons alpha, beta, epsilon, omega and kappa). Type I interferon binding activates the JAK-STAT signaling cascade, and triggers tyrosine phosphorylation of a number of proteins including JAKs, TYK2, STAT proteins and the IFNR alpha- and beta-subunits themselves. STAT proteins are then phosphorylated by the JAKs, promoting their translocation into the nucleus to regulate expression of interferon-regulated genes. Can also act independently of IFNAR2: form an active IFNB1 receptor by itself and activate a signaling cascade that does not involve activation of the JAK-STAT pathway. The sequence is that of Interferon alpha/beta receptor 1 (Ifnar1) from Mus musculus (Mouse).